The chain runs to 360 residues: Magnesium-protoporphyrin IX monomethyl ester [oxidative] cyclase (360 aa).

The interval Met1–Lys20 is disordered.

The protein belongs to the AcsF family. Fe cation serves as cofactor.

The enzyme catalyses Mg-protoporphyrin IX 13-monomethyl ester + 3 NADPH + 3 O2 + 2 H(+) = 3,8-divinyl protochlorophyllide a + 3 NADP(+) + 5 H2O. It functions in the pathway porphyrin-containing compound metabolism; chlorophyll biosynthesis (light-independent). In terms of biological role, catalyzes the formation of the isocyclic ring in chlorophyll biosynthesis. Mediates the cyclase reaction, which results in the formation of divinylprotochlorophyllide (Pchlide) characteristic of all chlorophylls from magnesium-protoporphyrin IX 13-monomethyl ester (MgPMME). This Synechococcus sp. (strain RCC307) protein is Magnesium-protoporphyrin IX monomethyl ester [oxidative] cyclase.